Consider the following 508-residue polypeptide: Glycerol kinase (508 aa).

Threonine 17 is a binding site for ADP. Residues threonine 17, threonine 18, and serine 19 each contribute to the ATP site. Threonine 17 provides a ligand contact to sn-glycerol 3-phosphate. An ADP-binding site is contributed by arginine 21. Arginine 87, glutamate 88, tyrosine 139, and aspartate 256 together coordinate sn-glycerol 3-phosphate. Residues arginine 87, glutamate 88, tyrosine 139, aspartate 256, and glutamine 257 each contribute to the glycerol site. Positions 278 and 322 each coordinate ADP. 4 residues coordinate ATP: threonine 278, glycine 322, glutamine 326, and alanine 423. Residues alanine 423 and asparagine 427 each coordinate ADP.

The protein belongs to the FGGY kinase family.

It carries out the reaction glycerol + ATP = sn-glycerol 3-phosphate + ADP + H(+). It functions in the pathway polyol metabolism; glycerol degradation via glycerol kinase pathway; sn-glycerol 3-phosphate from glycerol: step 1/1. With respect to regulation, inhibited by fructose 1,6-bisphosphate (FBP). Key enzyme in the regulation of glycerol uptake and metabolism. Catalyzes the phosphorylation of glycerol to yield sn-glycerol 3-phosphate. The protein is Glycerol kinase of Corynebacterium efficiens (strain DSM 44549 / YS-314 / AJ 12310 / JCM 11189 / NBRC 100395).